Reading from the N-terminus, the 438-residue chain is 3-phosphoshikimate 1-carboxyvinyltransferase (438 aa).

Residues lysine 26, serine 27, and arginine 31 each contribute to the 3-phosphoshikimate site. Residue lysine 26 coordinates phosphoenolpyruvate. Positions 99 and 127 each coordinate phosphoenolpyruvate. Residues serine 172, glutamine 174, aspartate 320, and lysine 347 each contribute to the 3-phosphoshikimate site. A phosphoenolpyruvate-binding site is contributed by glutamine 174. Aspartate 320 functions as the Proton acceptor in the catalytic mechanism. Residues arginine 351 and arginine 392 each contribute to the phosphoenolpyruvate site.

It belongs to the EPSP synthase family. In terms of assembly, monomer.

The protein resides in the cytoplasm. It catalyses the reaction 3-phosphoshikimate + phosphoenolpyruvate = 5-O-(1-carboxyvinyl)-3-phosphoshikimate + phosphate. It functions in the pathway metabolic intermediate biosynthesis; chorismate biosynthesis; chorismate from D-erythrose 4-phosphate and phosphoenolpyruvate: step 6/7. Its function is as follows. Catalyzes the transfer of the enolpyruvyl moiety of phosphoenolpyruvate (PEP) to the 5-hydroxyl of shikimate-3-phosphate (S3P) to produce enolpyruvyl shikimate-3-phosphate and inorganic phosphate. This chain is 3-phosphoshikimate 1-carboxyvinyltransferase, found in Xanthomonas campestris pv. campestris (strain B100).